Consider the following 349-residue polypeptide: Rhodopsin (349 aa).

Residues 1–33 (TEGPYFYIPMSNATGIVRSPYEYPQYYLVYPAA) lie on the Extracellular side of the membrane. N-linked (GlcNAc...) asparagine glycosylation occurs at Asn-12. Residues 34–58 (YAVLGAYMFFLIIFGFPVNFLTLYV) form a helical membrane-spanning segment. Residues 59 to 70 (TIEHKKLRTPLN) lie on the Cytoplasmic side of the membrane. The chain crosses the membrane as a helical span at residues 71–93 (YILLNLAVADLFMVIGGFTTTIY). Topologically, residues 94-107 (TSMHGYFVLGRLGC) are extracellular. Cys-107 and Cys-184 form a disulfide bridge. A helical transmembrane segment spans residues 108 to 130 (NLEGFSATLGGMIGLWSLVVLAI). The 'Ionic lock' involved in activated form stabilization motif lies at 131 to 133 (ERW). Topologically, residues 131 to 149 (ERWVVVCKPMSNFRFGENH) are cytoplasmic. The chain crosses the membrane as a helical span at residues 150–170 (AIMGVTLTWVMGLACTVPPLV). Residues 171-199 (GWSRYIPEGMQCSCGIDYYTRAEGFNNDS) are Extracellular-facing. The N-linked (GlcNAc...) asparagine glycan is linked to Asn-197. The helical transmembrane segment at 200 to 221 (YVLYMFVCHFLIPLVVIFFCYG) threads the bilayer. At 222-249 (RLLCAVKEAAAAQQESETTQRAEREVTR) the chain is on the cytoplasmic side. A helical transmembrane segment spans residues 250-271 (MVILMVIGFLVCWLPYASVAWY). Residues 272–283 (IFTHQGSEFGPL) lie on the Extracellular side of the membrane. A helical transmembrane segment spans residues 284–305 (FMTIPAFFAKSSSIYNPVIYIC). An N6-(retinylidene)lysine modification is found at Lys-293. The Cytoplasmic segment spans residues 306–349 (MNKQFRQCMLTTLFCGKNPFEEEEGASSTKTEASSASSSSVSPA). Residue Cys-320 is the site of S-palmitoyl cysteine attachment. Residues 326–349 (EEEEGASSTKTEASSASSSSVSPA) form a disordered region. Low complexity predominate over residues 331–349 (ASSTKTEASSASSSSVSPA).

Belongs to the G-protein coupled receptor 1 family. Opsin subfamily. Post-translationally, phosphorylated on some or all of the serine and threonine residues present in the C-terminal region. Contains one covalently linked retinal chromophore.

The protein localises to the membrane. The protein resides in the cell projection. It localises to the cilium. Its subcellular location is the photoreceptor outer segment. In terms of biological role, photoreceptor required for image-forming vision at low light intensity. While most salt water fish species use retinal as chromophore, most freshwater fish use 3-dehydroretinal, or a mixture of retinal and 3-dehydroretinal. Light-induced isomerization of 11-cis to all-trans retinal triggers a conformational change that activates signaling via G-proteins. Subsequent receptor phosphorylation mediates displacement of the bound G-protein alpha subunit by arrestin and terminates signaling. In Myripristis violacea (Lattice soldierfish), this protein is Rhodopsin (rho).